An 828-amino-acid polypeptide reads, in one-letter code: Periplasmic nitrate reductase (828 aa).

The tat-type signal signal peptide spans 1 to 31; the sequence is MKLSRRSFMKANAVAAAAAAAGLSVPGVARA. A 4Fe-4S Mo/W bis-MGD-type domain is found at 39–95; the sequence is IKWDKAPCRFCGTGCGVLVGTQQGRVVACQGDPDAPVNRGLNCIKGYFLPKIMYGKD. Residues cysteine 46, cysteine 49, cysteine 53, and cysteine 81 each contribute to the [4Fe-4S] cluster site. Residues lysine 83, glutamine 150, asparagine 175, cysteine 179, 212-219, 243-247, 262-264, methionine 372, glutamine 376, asparagine 482, 508-509, lysine 531, aspartate 558, and 718-727 each bind Mo-bis(molybdopterin guanine dinucleotide); these read WGSNMAEM, STFQH, QSD, SD, and TGRVLEHWHT. Phenylalanine 794 serves as a coordination point for substrate. Positions 802 and 819 each coordinate Mo-bis(molybdopterin guanine dinucleotide).

It belongs to the prokaryotic molybdopterin-containing oxidoreductase family. NasA/NapA/NarB subfamily. As to quaternary structure, component of the periplasmic nitrate reductase NapAB complex composed of NapA and NapB. It depends on [4Fe-4S] cluster as a cofactor. Mo-bis(molybdopterin guanine dinucleotide) is required as a cofactor. Predicted to be exported by the Tat system. The position of the signal peptide cleavage has not been experimentally proven.

The protein localises to the periplasm. The enzyme catalyses 2 Fe(II)-[cytochrome] + nitrate + 2 H(+) = 2 Fe(III)-[cytochrome] + nitrite + H2O. Functionally, catalytic subunit of the periplasmic nitrate reductase complex NapAB. Receives electrons from NapB and catalyzes the reduction of nitrate to nitrite. This Salmonella dublin (strain CT_02021853) protein is Periplasmic nitrate reductase.